A 513-amino-acid polypeptide reads, in one-letter code: Probable cytosol aminopeptidase (513 aa).

Mn(2+) contacts are provided by lysine 277 and aspartate 282. Residue lysine 289 is part of the active site. 3 residues coordinate Mn(2+): aspartate 300, aspartate 359, and glutamate 361. Arginine 363 is an active-site residue.

This sequence belongs to the peptidase M17 family. Mn(2+) is required as a cofactor.

The protein localises to the cytoplasm. It catalyses the reaction Release of an N-terminal amino acid, Xaa-|-Yaa-, in which Xaa is preferably Leu, but may be other amino acids including Pro although not Arg or Lys, and Yaa may be Pro. Amino acid amides and methyl esters are also readily hydrolyzed, but rates on arylamides are exceedingly low.. The catalysed reaction is Release of an N-terminal amino acid, preferentially leucine, but not glutamic or aspartic acids.. Functionally, presumably involved in the processing and regular turnover of intracellular proteins. Catalyzes the removal of unsubstituted N-terminal amino acids from various peptides. This Mycobacterium sp. (strain JLS) protein is Probable cytosol aminopeptidase.